The sequence spans 617 residues: Secretogranin-2 (617 aa).

The first 27 residues, 1–27 (MAEAKTHWLGAALSLIPLIFLISGAEA), serve as a signal peptide directing secretion. Positions 28-30 (ASF) are excised as a propeptide. The disordered stretch occupies residues 120–143 (QAENEPQSAPKENKPYALNSEKNF). Position 151 is a sulfotyrosine (Y151). Residue S174 is modified to Phosphoserine. Positions 182–200 (TNEIVEEQYTPQSLATLES) are O-glycosylated at one site. Composition is skewed to basic and acidic residues over residues 257–284 (IESQ…EMKR) and 293–302 (EDLRKESKDQ). The disordered stretch occupies residues 257-302 (IESQTQEEVRDSKENIEKNEQINDEMKRSGQLGIQEEDLRKESKDQ). Position 268 is a phosphoserine (S268). A phosphoserine mark is found at S432, S532, S555, and S556. Positions 552–583 (NQGSSQETDKLAPVSKRFPVGPPKNDDTPNRQ) are disordered.

Belongs to the chromogranin/secretogranin protein family. As to quaternary structure, interacts with Secretogranin III/SCG3. Post-translationally, O-glycosylated.

It is found in the secreted. Its function is as follows. Neuroendocrine protein of the granin family that regulates the biogenesis of secretory granules. This is Secretogranin-2 (SCG2) from Homo sapiens (Human).